We begin with the raw amino-acid sequence, 188 residues long: Protease-associated domain-containing protein 1 (188 aa).

The N-terminal stretch at 1–21 is a signal peptide; that stretch reads MVPGAAGWCCLVLWLPACVAA. One can recognise a PA domain in the interval 83–163; the sequence is IQDQIALVER…RSLEQHGLPW (81 aa). N-linked (GlcNAc...) asparagine glycosylation is present at Asn171.

In terms of processing, N-glycosylated; required for efficient secretion. Highly expressed in skeletal muscle, heart and liver. Expressed at intermediate level in kidney.

The protein localises to the secreted. Plays a role in the modulation of physical activity and adiposity. In Homo sapiens (Human), this protein is Protease-associated domain-containing protein 1.